The chain runs to 194 residues: FMN-dependent NADH:quinone oxidoreductase 1 (194 aa).

FMN contacts are provided by residues S9 and 85 to 88 (MYNF).

It belongs to the azoreductase type 1 family. As to quaternary structure, homodimer. FMN serves as cofactor.

It catalyses the reaction 2 a quinone + NADH + H(+) = 2 a 1,4-benzosemiquinone + NAD(+). It carries out the reaction N,N-dimethyl-1,4-phenylenediamine + anthranilate + 2 NAD(+) = 2-(4-dimethylaminophenyl)diazenylbenzoate + 2 NADH + 2 H(+). Its function is as follows. Quinone reductase that provides resistance to thiol-specific stress caused by electrophilic quinones. Functionally, also exhibits azoreductase activity. Catalyzes the reductive cleavage of the azo bond in aromatic azo compounds to the corresponding amines. The polypeptide is FMN-dependent NADH:quinone oxidoreductase 1 (Xanthomonas euvesicatoria pv. vesicatoria (strain 85-10) (Xanthomonas campestris pv. vesicatoria)).